A 560-amino-acid polypeptide reads, in one-letter code: Formate--tetrahydrofolate ligase (560 aa).

69–76 (TPAGEGKS) contributes to the ATP binding site.

The protein belongs to the formate--tetrahydrofolate ligase family.

The catalysed reaction is (6S)-5,6,7,8-tetrahydrofolate + formate + ATP = (6R)-10-formyltetrahydrofolate + ADP + phosphate. Its pathway is one-carbon metabolism; tetrahydrofolate interconversion. This is Formate--tetrahydrofolate ligase from Listeria monocytogenes serotype 4b (strain CLIP80459).